We begin with the raw amino-acid sequence, 337 residues long: Phenylalanine--tRNA ligase alpha subunit (337 aa).

E258 provides a ligand contact to Mg(2+).

This sequence belongs to the class-II aminoacyl-tRNA synthetase family. Phe-tRNA synthetase alpha subunit type 1 subfamily. Tetramer of two alpha and two beta subunits. Requires Mg(2+) as cofactor.

The protein localises to the cytoplasm. It catalyses the reaction tRNA(Phe) + L-phenylalanine + ATP = L-phenylalanyl-tRNA(Phe) + AMP + diphosphate + H(+). The chain is Phenylalanine--tRNA ligase alpha subunit from Paraburkholderia phytofirmans (strain DSM 17436 / LMG 22146 / PsJN) (Burkholderia phytofirmans).